The following is a 376-amino-acid chain: Cytochrome b (376 aa).

The next 4 membrane-spanning stretches (helical) occupy residues 28–48 (YGFL…FLAS), 72–94 (WCFR…LHIL), 107–127 (SWIS…VGYV), and 169–189 (FFVL…IHIF). Heme b-binding residues include histidine 78 and histidine 92. Heme b is bound by residues histidine 173 and histidine 187. Histidine 192 is a binding site for a ubiquinone. Helical transmembrane passes span 214–234 (LLSL…IQSL), 274–294 (VPSK…LFLL), 317–337 (VPII…CQLP), and 340–360 (IFIL…LFVL).

This sequence belongs to the cytochrome b family. As to quaternary structure, the main subunits of complex b-c1 are: cytochrome b, cytochrome c1 and the Rieske protein. Requires heme b as cofactor.

Its subcellular location is the mitochondrion inner membrane. Its function is as follows. Component of the ubiquinol-cytochrome c reductase complex (complex III or cytochrome b-c1 complex) that is part of the mitochondrial respiratory chain. The b-c1 complex mediates electron transfer from ubiquinol to cytochrome c. Contributes to the generation of a proton gradient across the mitochondrial membrane that is then used for ATP synthesis. The chain is Cytochrome b (MT-CYB) from Plasmodium falciparum.